Here is a 364-residue protein sequence, read N- to C-terminus: BOLA class I histocompatibility antigen, alpha chain BL3-7 (364 aa).

The signal sequence occupies residues 1 to 27 (MRVMRVMRPRTLLLLLSGVLVLTETLA). The alpha-1 stretch occupies residues 28 to 117 (GSHSLRYFYT…LRGYYNQSET (90 aa)). Residues 28–310 (GSHSLRYFYT…WEPPQTSFLI (283 aa)) lie on the Extracellular side of the membrane. An N-linked (GlcNAc...) asparagine glycan is attached at Asn-113. Residues 118 to 209 (GSHNIQAMYG…ENGKDTLLRA (92 aa)) are alpha-2. 2 disulfides stabilise this stretch: Cys-128-Cys-191 and Cys-230-Cys-286. The segment at 210–301 (DPPKAHVTHH…GLQEPLTLRW (92 aa)) is alpha-3. An Ig-like C1-type domain is found at 212-298 (PKAHVTHHSI…QHEGLQEPLT (87 aa)). The connecting peptide stretch occupies residues 302-310 (EPPQTSFLI). Residues 311 to 331 (MGIIVGLVLLVVALVAGAVIW) form a helical membrane-spanning segment. The Cytoplasmic portion of the chain corresponds to 332–364 (RKKRSGEKGRIYTQAASSDSAQGSDVSLTVPKV). Phosphoserine occurs at positions 355 and 358.

Belongs to the MHC class I family. Heterodimer of an alpha chain and a beta chain (beta-2-microglobulin).

The protein localises to the membrane. Its function is as follows. Involved in the presentation of foreign antigens to the immune system. In Bos taurus (Bovine), this protein is BOLA class I histocompatibility antigen, alpha chain BL3-7.